A 202-amino-acid polypeptide reads, in one-letter code: Matrix protein (202 aa).

The PPXY motif signature appears at 35 to 38 (PPEY). The essential for glycoprotein binding stretch occupies residues 115 to 151 (KIRRTLVFQWAESSGPLDGEELEYSQEITWDDDSEFV).

This sequence belongs to the lyssavirus matrix protein family. As to quaternary structure, homomultimer. Interacts with nucleoprotein and with the cytoplasmic domain of glycoprotein.

The protein resides in the virion membrane. It localises to the host endomembrane system. Functionally, plays a major role in assembly and budding of virion. Completely covers the ribonucleoprotein coil and keep it in condensed bullet-shaped form. Inhibits viral transcription and stimulates replication. Plays a major role in early induction of TRAIL-mediated apoptosis in infected neurons. The chain is Matrix protein (M) from Irkut virus (IRKV).